The sequence spans 887 residues: ABC transporter A family member 10 (887 aa).

The next 7 membrane-spanning stretches (helical) occupy residues 38–58 (GIQYIIVLVILHYTIPNVITL), 198–218 (YLYVIYLPLLFLFSLQQLLVT), 245–265 (IIIVQTITNVINILLVMVVLY), 277–297 (VMLFLQFLLYSFSMVAIGIIL), 309–329 (AISSFLLLILVGVSCFYQFYL), 335–355 (SSWLRSILFLFSPCAFGEFLY), and 376–396 (ISFLFLIIDIFLYFTIAWYIT). Positions 443–469 (NNCNNNNTSPSSSSSSQSSPLNKPLLS) are enriched in low complexity. The disordered stretch occupies residues 443–474 (NNCNNNNTSPSSSSSSQSSPLNKPLLSGDSDD). In terms of domain architecture, ABC transporter spans 481 to 728 (IRLVNLKKTY…FNLGYILTIV (248 aa)). 519–526 (GQNGSGKT) is an ATP binding site. The span at 774–797 (NNNNNENNSNNSDGSSSSSDSSSS) shows a compositional bias: low complexity. The interval 774 to 799 (NNNNNENNSNNSDGSSSSSDSSSSKD) is disordered.

Belongs to the ABC transporter superfamily. ABCA family.

The protein resides in the membrane. The protein is ABC transporter A family member 10 (abcA10) of Dictyostelium discoideum (Social amoeba).